A 187-amino-acid chain; its full sequence is Peptidyl-tRNA hydrolase (187 aa).

Tyr15 contacts tRNA. His20 (proton acceptor) is an active-site residue. The tRNA site is built by Phe64, Asn66, and Asn112.

The protein belongs to the PTH family. Monomer.

The protein resides in the cytoplasm. It catalyses the reaction an N-acyl-L-alpha-aminoacyl-tRNA + H2O = an N-acyl-L-amino acid + a tRNA + H(+). In terms of biological role, hydrolyzes ribosome-free peptidyl-tRNAs (with 1 or more amino acids incorporated), which drop off the ribosome during protein synthesis, or as a result of ribosome stalling. Catalyzes the release of premature peptidyl moieties from peptidyl-tRNA molecules trapped in stalled 50S ribosomal subunits, and thus maintains levels of free tRNAs and 50S ribosomes. In Bacteroides fragilis (strain ATCC 25285 / DSM 2151 / CCUG 4856 / JCM 11019 / LMG 10263 / NCTC 9343 / Onslow / VPI 2553 / EN-2), this protein is Peptidyl-tRNA hydrolase.